Reading from the N-terminus, the 284-residue chain is Pantothenate synthetase (284 aa).

34 to 41 is an ATP binding site; the sequence is MGALHAGH. Residue His41 is the Proton donor of the active site. Residue Gln65 participates in (R)-pantoate binding. Gln65 contributes to the beta-alanine binding site. Residue 151-154 coordinates ATP; that stretch reads GEKD. A (R)-pantoate-binding site is contributed by Gln157. Residues Leu180 and 188-191 contribute to the ATP site; that span reads MSSR.

The protein belongs to the pantothenate synthetase family. Homodimer.

Its subcellular location is the cytoplasm. The catalysed reaction is (R)-pantoate + beta-alanine + ATP = (R)-pantothenate + AMP + diphosphate + H(+). The protein operates within cofactor biosynthesis; (R)-pantothenate biosynthesis; (R)-pantothenate from (R)-pantoate and beta-alanine: step 1/1. Its function is as follows. Catalyzes the condensation of pantoate with beta-alanine in an ATP-dependent reaction via a pantoyl-adenylate intermediate. The chain is Pantothenate synthetase from Paramagnetospirillum magneticum (strain ATCC 700264 / AMB-1) (Magnetospirillum magneticum).